A 538-amino-acid polypeptide reads, in one-letter code: MGTRVTQFSYLHAPSSHMAEQLLNQFISAVISKSRHLNHLKQVQSFMIVSGLSHSHFLCFKLLRFCTLRLCNLSYARFIFDRFSFPNTHLYAAVLTAYSSSLPLHASSAFSFFRLMVNRSVPRPNHFIYPLVLKSTPYLSSAFSTPLVHTHLFKSGFHLYVVVQTALLHSYASSVSHITLARQLFDEMSERNVVSWTAMLSGYARSGDISNAVALFEDMPERDVPSWNAILAACTQNGLFLEAVSLFRRMINEPSIRPNEVTVVCVLSACAQTGTLQLAKGIHAFAYRRDLSSDVFVSNSLVDLYGKCGNLEEASSVFKMASKKSLTAWNSMINCFALHGRSEEAIAVFEEMMKLNINDIKPDHITFIGLLNACTHGGLVSKGRGYFDLMTNRFGIEPRIEHYGCLIDLLGRAGRFDEALEVMSTMKMKADEAIWGSLLNACKIHGHLDLAEVAVKNLVALNPNNGGYVAMMANLYGEMGNWEEARRARKMIKHQNAYKPPGWSRIEIDNEVHQFYSLDKSHPETEEIYMILDSLISF.

PPR repeat units follow at residues 87 to 123 (NTHLYAAVLTAYSSSLPLHASSAFSFFRLMVNRSVPR), 125 to 159 (NHFIYPLVLKSTPYLSSAFSTPLVHTHLFKSGFHL), 160 to 191 (YVVVQTALLHSYASSVSHITLARQLFDEMSER), 192 to 226 (NVVSWTAMLSGYARSGDISNAVALFEDMPERDVPS), 227 to 253 (WNAILAACTQNGLFLEAVSLFRRMINE), 259 to 293 (NEVTVVCVLSACAQTGTLQLAKGIHAFAYRRDLSS), 294 to 324 (DVFVSNSLVDLYGKCGNLEEASSVFKMASKK), 325 to 359 (SLTAWNSMINCFALHGRSEEAIAVFEEMMKLNIND), 363 to 398 (DHITFIGLLNACTHGGLVSKGRGYFDLMTNRFGIEP), and 399 to 433 (RIEHYGCLIDLLGRAGRFDEALEVMSTMKMKADEA). The tract at residues 434–509 (IWGSLLNACK…PPGWSRIEID (76 aa)) is type E motif.

Belongs to the PPR family. PCMP-E subfamily.

In Arabidopsis thaliana (Mouse-ear cress), this protein is Pentatricopeptide repeat-containing protein At1g33350 (PCMP-E57).